The sequence spans 252 residues: Phosphomannomutase (252 aa).

The active-site Nucleophile is Asp-13. Residues Asp-13 and Asp-15 each coordinate Mg(2+). Catalysis depends on Asp-15, which acts as the Proton donor/acceptor. Arg-22, Arg-124, Arg-135, Arg-142, Ser-180, and Asp-182 together coordinate alpha-D-mannose 1-phosphate. The Mg(2+) site is built by Asp-208, Tyr-220, and Thr-225.

This sequence belongs to the eukaryotic PMM family. As to quaternary structure, homodimer. The cofactor is Mg(2+). Expressed in roots, stems, leaves, flowers and immature fruits.

The protein resides in the cytoplasm. The enzyme catalyses alpha-D-mannose 1-phosphate = D-mannose 6-phosphate. Its pathway is nucleotide-sugar biosynthesis; GDP-alpha-D-mannose biosynthesis; alpha-D-mannose 1-phosphate from D-fructose 6-phosphate: step 2/2. In terms of biological role, catalyzes the interconversion of mannose-6-phosphate to mannose-1-phosphate, the precursor for the synthesis of GDP-mannose. GDP-mannose is an essential sugar nucleotide for the synthesis of D-mannose-containing cell wall polysaccharides (galactomannans and glucomannans), glycolipids, glycoproteins and the antioxidant L-ascorbate. Can complement the yeast temperature-sensitive mutant sec53-6. The protein is Phosphomannomutase of Nicotiana benthamiana.